A 152-amino-acid polypeptide reads, in one-letter code: Cell division protein SepF (152 aa).

Residues 25–54 form a disordered region; the sequence is EEREPVQEEKGTKDKAAFQERPQTGKQNVV. Residues 28 to 42 show a composition bias toward basic and acidic residues; that stretch reads EPVQEEKGTKDKAAF.

Belongs to the SepF family. Homodimer. Interacts with FtsZ.

Its subcellular location is the cytoplasm. In terms of biological role, cell division protein that is part of the divisome complex and is recruited early to the Z-ring. Probably stimulates Z-ring formation, perhaps through the cross-linking of FtsZ protofilaments. Its function overlaps with FtsA. In Bacillus pumilus (strain SAFR-032), this protein is Cell division protein SepF.